The chain runs to 249 residues: tRNA pseudouridine synthase A (249 aa).

D52 (nucleophile) is an active-site residue. Residue Y111 participates in substrate binding.

Belongs to the tRNA pseudouridine synthase TruA family. As to quaternary structure, homodimer.

It catalyses the reaction uridine(38/39/40) in tRNA = pseudouridine(38/39/40) in tRNA. Functionally, formation of pseudouridine at positions 38, 39 and 40 in the anticodon stem and loop of transfer RNAs. The protein is tRNA pseudouridine synthase A of Maricaulis maris (strain MCS10) (Caulobacter maris).